The following is a 185-amino-acid chain: Ribosome-recycling factor (185 aa).

This sequence belongs to the RRF family.

The protein localises to the cytoplasm. Functionally, responsible for the release of ribosomes from messenger RNA at the termination of protein biosynthesis. May increase the efficiency of translation by recycling ribosomes from one round of translation to another. The polypeptide is Ribosome-recycling factor (Geobacter sulfurreducens (strain ATCC 51573 / DSM 12127 / PCA)).